The primary structure comprises 503 residues: Mitogen-activated protein kinase kinae mkk2 (503 aa).

Residues 1-130 are disordered; that stretch reads MSSSPVPLLR…ASGPASASSS (130 aa). Residues 53–66 show a composition bias toward pro residues; that stretch reads APQPQRPSTRPAPP. The span at 100 to 115 shows a compositional bias: polar residues; sequence TGLNESTGHSRSSSFT. Over residues 121–130 the composition is skewed to low complexity; that stretch reads ASGPASASSS. In terms of domain architecture, Protein kinase spans 211-481; it reads IIELGSLGEG…PWRMLEHPWM (271 aa). Residues 217 to 225 and Lys-240 each bind ATP; that span reads LGEGAGGAV. Asp-338 (proton acceptor) is an active-site residue.

Belongs to the protein kinase superfamily. STE Ser/Thr protein kinase family. MAP kinase kinase subfamily.

The enzyme catalyses L-seryl-[protein] + ATP = O-phospho-L-seryl-[protein] + ADP + H(+). The catalysed reaction is L-threonyl-[protein] + ATP = O-phospho-L-threonyl-[protein] + ADP + H(+). In terms of biological role, mitogen-activated kinase kinase (MAPKK), part of the cell wall integrity (CWI) signaling pathway composed by three protein kinases bck1, mkk2 and mpkA and responsible for the maintaining of cell-wall integrity balance. The CWI pathway also regulates the oxidative stress response, as well as the production of some secondary metabolites including pyomelanin. The chain is Mitogen-activated protein kinase kinae mkk2 from Aspergillus fumigatus (strain CBS 144.89 / FGSC A1163 / CEA10) (Neosartorya fumigata).